Here is a 309-residue protein sequence, read N- to C-terminus: Beta-ketoacyl-[acyl-carrier-protein] synthase III (309 aa).

Catalysis depends on residues Cys-111 and His-236. The tract at residues 237 to 241 (QANVR) is ACP-binding. Asn-266 is a catalytic residue.

It belongs to the thiolase-like superfamily. FabH family. As to quaternary structure, homodimer.

Its subcellular location is the cytoplasm. The enzyme catalyses malonyl-[ACP] + acetyl-CoA + H(+) = 3-oxobutanoyl-[ACP] + CO2 + CoA. The protein operates within lipid metabolism; fatty acid biosynthesis. Catalyzes the condensation reaction of fatty acid synthesis by the addition to an acyl acceptor of two carbons from malonyl-ACP. Catalyzes the first condensation reaction which initiates fatty acid synthesis and may therefore play a role in governing the total rate of fatty acid production. Possesses both acetoacetyl-ACP synthase and acetyl transacylase activities. Its substrate specificity determines the biosynthesis of branched-chain and/or straight-chain of fatty acids. The sequence is that of Beta-ketoacyl-[acyl-carrier-protein] synthase III from Aquifex aeolicus (strain VF5).